A 2108-amino-acid chain; its full sequence is Mucin-5B (2108 aa).

Positions 1 to 21 (MEIKKERSFWIFCLIWSFCKG) are cleaved as a signal peptide. Residues 36-203 (SECTTWGNFH…KVEDPSEKCP (168 aa)) form the VWFD 1 domain. 2 disulfide bridges follow: cysteine 38–cysteine 166 and cysteine 60–cysteine 202. The tract at residues 196–219 (EDPSEKCPDVRPDDHTGRHPTEDD) is disordered. In terms of domain architecture, TIL 1 spans 304 to 360 (CPSNMEYMECGNSCADTCADPERSKICKAPCTDGCFCPPGTILDDLGGKKCVPRDSC). N-linked (GlcNAc...) (complex) asparagine glycosylation occurs at asparagine 381. Residues 398–570 (GSCSIDGGFH…NSWKTRASCF (173 aa)) enclose the VWFD 2 domain. 3 disulfides stabilise this stretch: cysteine 400/cysteine 534, cysteine 422/cysteine 569, and cysteine 443/cysteine 451. Asparagine 528, asparagine 599, asparagine 680, and asparagine 772 each carry an N-linked (GlcNAc...) (complex) asparagine glycan. Residues 666 to 723 (CPETMVYNYSVKYCNQSCRSLDEPDPLCKVQIAPMEGCGCPEGTYLNDEEECVTPDDC) enclose the TIL 2 domain. One can recognise a TIL 3 domain in the interval 782-825 (GSECQKSCKTQDMHCYVTECVSGCMCPDGLVLDGSGGCIPKDQC). One can recognise a VWFC 1 domain in the interval 825–897 (CPCVHGGHFY…DYILAQDFCP (73 aa)). Residue asparagine 855 is glycosylated (N-linked (GlcNAc...) (complex) asparagine). In terms of domain architecture, VWFD 3 spans 863-1033 (GTCTVYGNGH…NSWKITSTCS (171 aa)). Intrachain disulfides connect cysteine 865/cysteine 997, cysteine 887/cysteine 1032, cysteine 896/cysteine 994, and cysteine 914/cysteine 921. N-linked (GlcNAc...) (complex) asparagine glycosylation is found at asparagine 1036, asparagine 1219, asparagine 1371, and asparagine 1452. The 185-residue stretch at 1429-1613 (CICSGWGNEH…APVSTNRYCN (185 aa)) folds into the VWFD 4 domain. 3 disulfides stabilise this stretch: cysteine 1431–cysteine 1573, cysteine 1453–cysteine 1612, and cysteine 1477–cysteine 1485. Asparagine 1567, asparagine 1639, asparagine 1792, asparagine 1807, and asparagine 1841 each carry an N-linked (GlcNAc...) (complex) asparagine glycan. Positions 1761 to 1832 (CGCTAQDGSV…DPCCTETVCE (72 aa)) constitute a VWFC 2 domain. Residues 1870–1937 (GVCVSEGVEF…KEGQCCSQCQ (68 aa)) form the VWFC 3 domain. N-linked (GlcNAc...) (complex) asparagine glycosylation is present at asparagine 1964. Intrachain disulfides connect cysteine 2010-cysteine 2066, cysteine 2031-cysteine 2080, cysteine 2042-cysteine 2096, and cysteine 2046-cysteine 2098. The region spanning 2010–2104 (CIDLPHKCKR…ECGCVETKCP (95 aa)) is the CTCK domain.

Homomultimer; disulfide-linked. The N- and C-terminus mediate their assembly into higher order structures to form filaments. The CTCK domains of two polypeptides associate in the endoplasmic reticulum to generate intermolecularly disulfide-bonded dimers. These dimers progress to the Golgi apparatus, which is a more acidic environment than the endoplasmic reticulum. Under acidic conditions, the N-termini form non-covalent intermolecular interactions that juxtapose assemblies from different CTCK-linked dimers to produce long, disulfide-linked polymers that remain highly compact until secretion. Post-translationally, N-glycosylated. Complex glycosylation with bisecting N-acetylglucosamine. Contains mainly N-acetylglucosamine (3.1-8.5%), mannose (2.9-4.6%), a small amount of galactose (1.1-4.35) and sialic acid (0.3-1.3%). Most abundant glycan is composed of a GlcNAc(2)Man(3) core, a bisecting GlcNAc and another 3 GlcNAc antannae located on the mannoses of the core. Site Asn-1639 exists both in glycosylated and non-glycosylated forms.

The protein resides in the secreted. Ovomucin, the glycoprotein responsible for the gel properties of egg white, is composed for 2 subunits, alpha-ovomucin/MUC5B and beta-ovomucin/MUC6. This chain is Mucin-5B (MUC5B), found in Gallus gallus (Chicken).